The chain runs to 92 residues: DNA-directed RNA polymerase subunit Rpo11 (92 aa).

It belongs to the archaeal Rpo11/eukaryotic RPB11/RPC19 RNA polymerase subunit family. As to quaternary structure, part of the RNA polymerase complex.

The protein localises to the cytoplasm. It catalyses the reaction RNA(n) + a ribonucleoside 5'-triphosphate = RNA(n+1) + diphosphate. Its function is as follows. DNA-dependent RNA polymerase (RNAP) catalyzes the transcription of DNA into RNA using the four ribonucleoside triphosphates as substrates. This is DNA-directed RNA polymerase subunit Rpo11 from Pyrobaculum aerophilum (strain ATCC 51768 / DSM 7523 / JCM 9630 / CIP 104966 / NBRC 100827 / IM2).